We begin with the raw amino-acid sequence, 206 residues long: Cytidylate kinase (206 aa).

9–17 (GPAAAGKGT) provides a ligand contact to ATP.

The protein belongs to the cytidylate kinase family. Type 1 subfamily.

The protein resides in the cytoplasm. It carries out the reaction CMP + ATP = CDP + ADP. The catalysed reaction is dCMP + ATP = dCDP + ADP. The sequence is that of Cytidylate kinase from Cereibacter sphaeroides (strain ATCC 17023 / DSM 158 / JCM 6121 / CCUG 31486 / LMG 2827 / NBRC 12203 / NCIMB 8253 / ATH 2.4.1.) (Rhodobacter sphaeroides).